The primary structure comprises 555 residues: Probable beta-glucosidase btgE (555 aa).

Positions 1–18 (MRGAILATAAAFAGTAVA) are cleaved as a signal peptide. Disordered stretches follow at residues 92–114 (TSSA…VTLP) and 263–290 (TTSA…PTGA). Positions 263 to 288 (TTSAASTTTAVPSSSTTTSSATSVPT) are enriched in low complexity. Glutamate 392 serves as the catalytic Proton donor. Glutamate 488 (nucleophile) is an active-site residue.

Belongs to the glycosyl hydrolase 17 family.

It localises to the secreted. The protein localises to the cell wall. It carries out the reaction Hydrolysis of terminal, non-reducing beta-D-glucosyl residues with release of beta-D-glucose.. It functions in the pathway glycan metabolism; cellulose degradation. In terms of biological role, beta-glucosidases are one of a number of cellulolytic enzymes involved in the degradation of cellulosic biomass. Catalyzes the last step releasing glucose from the inhibitory cellobiose. The protein is Probable beta-glucosidase btgE (btgE) of Emericella nidulans (strain FGSC A4 / ATCC 38163 / CBS 112.46 / NRRL 194 / M139) (Aspergillus nidulans).